The sequence spans 288 residues: Beta-lactamase PSE-4 (288 aa).

A signal peptide spans 1-17 (MKFLLAFSLLIPSVVFA). Catalysis depends on Ser65, which acts as the Acyl-ester intermediate. Cys72 and Cys118 are oxidised to a cystine. A substrate-binding site is contributed by 229-231 (RSG).

This sequence belongs to the class-A beta-lactamase family.

It carries out the reaction a beta-lactam + H2O = a substituted beta-amino acid. Its function is as follows. Hydrolyzes both carbenicillin and oxacillin. This Pseudomonas aeruginosa protein is Beta-lactamase PSE-4 (pse4).